Here is a 134-residue protein sequence, read N- to C-terminus: UPF0756 membrane protein YeaL (134 aa).

4 helical membrane passes run 14-34 (ALGF…LIIV), 51-71 (LTVG…SGTL), 86-106 (LVAI…ITLM), and 110-130 (PQLV…FRGV).

This sequence belongs to the UPF0756 family.

It is found in the cell membrane. This is UPF0756 membrane protein YeaL from Salmonella typhimurium (strain LT2 / SGSC1412 / ATCC 700720).